The primary structure comprises 295 residues: MNDFSQRFLFDDTDVRGEMVALRESYAHVLAKHAYPQPVAQLLGEMMAAAALLVGTLKFDGLLVLQARAEGPLSLLMVECSSARELRGIARYDAEQIGADADLQSLMPNGVLAITIDPSRGQRYQGIVDLDGVDLAECLSNYFASSEQLPTRFWLKADGQRARGLLLQQLPPHHQSEPQERQESWNHVLTLADTLTAEELLGLDNPTLLHRLYHQENVRLFDEQPLQFRCSCSRERSASALASLGQADAELLLAEQGGSVVIDCQFCNERYAFDAADIAQLFAGAGSEAPSQTRH.

2 disulfide bridges follow: Cys230/Cys232 and Cys264/Cys267.

It belongs to the HSP33 family. Under oxidizing conditions two disulfide bonds are formed involving the reactive cysteines. Under reducing conditions zinc is bound to the reactive cysteines and the protein is inactive.

The protein resides in the cytoplasm. Its function is as follows. Redox regulated molecular chaperone. Protects both thermally unfolding and oxidatively damaged proteins from irreversible aggregation. Plays an important role in the bacterial defense system toward oxidative stress. In Ectopseudomonas mendocina (strain ymp) (Pseudomonas mendocina), this protein is 33 kDa chaperonin.